Here is a 590-residue protein sequence, read N- to C-terminus: (+)-sabinene synthase, chloroplastic (590 aa).

The transit peptide at 1–51 directs the protein to the chloroplast; it reads MSSISINIAMPLNSLHNFERKPSKAWSTSCTAPAARLRASSSLQQEKPHQI. The Mg(2+) site is built by aspartate 343, aspartate 347, aspartate 487, threonine 491, and glutamate 495. The short motif at 343–347 is the DDXXD motif element; it reads DDVYD.

The protein belongs to the terpene synthase family. In terms of assembly, monomer. The cofactor is Mg(2+).

It is found in the plastid. The protein localises to the chloroplast. The enzyme catalyses (2E)-geranyl diphosphate = (1R,5R)-sabinene + diphosphate. The protein operates within terpene metabolism; sabinene hydrate biosynthesis. Functionally, catalyzes the formation of the (-)-3-isothujone precursor sabinene from geranyl diphosphate. The enzyme also produces significant amounts of gamma-terpinene, terpinolene and limonene. This is (+)-sabinene synthase, chloroplastic from Salvia officinalis (Sage).